The chain runs to 854 residues: SH2 domain-containing protein 3C (854 aa).

Ser22 carries the phosphoserine modification. The span at 34–43 shows a compositional bias: low complexity; sequence RSSASASIRS. The disordered stretch occupies residues 34–129; sequence RSSASASIRS…AKEAGEGTEA (96 aa). Residues 99–124 show a composition bias toward basic and acidic residues; it reads EVSRESHLVSRRLPEPPDLEAAKEAG. Residues 215–314 form the SH2 domain; sequence WYHGRIPREV…QSGAIIYCPV (100 aa). Phosphotyrosine is present on residues Tyr273 and Tyr278. Disordered regions lie at residues 330–384, 398–417, and 422–520; these read SQGS…PRDS, LHSP…YSTV, and APSA…ERQK. Positions 333-347 are enriched in low complexity; it reads SSKTASPASPSGSKG. Residue Ser354 is modified to Phosphoserine. Low complexity-rich tracts occupy residues 400 to 415, 422 to 436, and 474 to 485; these read SPLS…PAYS, APSA…PASP, and SPSPSLSSYSDP. Residue Ser435 is modified to Phosphoserine. Residues 508 to 520 are compositionally biased toward basic and acidic residues; it reads TPRKARGSGERQK. The Ras-GEF domain maps to 580–848; that stretch reads DARTLARHVT…TALSHKLEPA (269 aa). Tyr787 is subject to Phosphotyrosine.

In terms of assembly, component of a complex comprised of SH2D3C, BCAR1/CAS, and CRK. Within the complex, interacts with CRK and (via C-terminus) with BCAR1/CAS (via C-terminus). Interacts with NEDD9/HEF1. Interacts with EPHB2. As to quaternary structure, interacts with NEDD9/HEF1. Interacts with BCAR1/CAS. Interacts with PTK2B. Interacts (via C-terminus) with BCAR1/CAS (via C-terminus). Interacts with IGF1. Phosphorylated by MAPK/ERK upon T-cell receptor stimulation in T-cells. Expressed in the olfactory bulb and olfactory sensory neurons (at protein level). Expressed in B cells (at protein level). Expressed in T lymphocytes. As to expression, expressed in hematopoietic cells from spleen, lymph node and thymus (at protein level). Expressed weakly in the lung (at protein level). In terms of tissue distribution, expressed in the brain, lung, kidney, and weakly expressed in the liver and lung (at protein level).

Its subcellular location is the cytoplasm. It is found in the cell membrane. The protein resides in the cell projection. It localises to the axon. The protein localises to the ruffle membrane. Acts as an adapter protein that mediates cell signaling pathways involved in cellular functions such as cell adhesion and migration, tissue organization, and the regulation of the immune response. Plays a role in integrin-mediated cell adhesion through BCAR1-CRK-RAPGEF1 signaling and activation of the small GTPase RAP1. Promotes cell migration and invasion through the extracellular matrix. Required for marginal zone B-cell development and thymus-independent type 2 immune responses. Mediates migration and adhesion of B cells in the splenic marginal zone via promoting hyperphosphorylation of NEDD9/CASL. Plays a role in CXCL13-induced chemotaxis of B-cells. Plays a role in the migration of olfactory sensory neurons (OSNs) into the forebrain and the innervation of the olfactory bulb by the OSN axons during development. Required for the efficient tyrosine phosphorylation of BCAR1 in OSN axons. Functionally, important regulator of chemokine-induced, integrin-mediated T lymphocyte adhesion and migration, acting upstream of RAP1. Required for tissue-specific adhesion of T lymphocytes to peripheral tissues. Required for basal and CXCL2 stimulated serine-threonine phosphorylation of NEDD9. May be involved in the regulation of T-cell receptor-mediated IL2 production through the activation of the JNK pathway in T-cells. In terms of biological role, may be involved in the BCAR1/CAS-mediated JNK activation pathway. In Mus musculus (Mouse), this protein is SH2 domain-containing protein 3C (Sh2d3c).